The following is a 396-amino-acid chain: Elongation factor Tu (396 aa).

Residues lysine 10–glutamate 206 enclose the tr-type G domain. The tract at residues glycine 19 to threonine 26 is G1. Residue glycine 19 to threonine 26 participates in GTP binding. Position 26 (threonine 26) interacts with Mg(2+). Residues glycine 60–asparagine 64 form a G2 region. Residues aspartate 81 to glycine 84 are G3. GTP contacts are provided by residues aspartate 81–histidine 85 and asparagine 136–aspartate 139. A G4 region spans residues asparagine 136–aspartate 139. Positions serine 174–lysine 176 are G5.

It belongs to the TRAFAC class translation factor GTPase superfamily. Classic translation factor GTPase family. EF-Tu/EF-1A subfamily. Monomer.

The protein resides in the cytoplasm. The catalysed reaction is GTP + H2O = GDP + phosphate + H(+). Its function is as follows. GTP hydrolase that promotes the GTP-dependent binding of aminoacyl-tRNA to the A-site of ribosomes during protein biosynthesis. The polypeptide is Elongation factor Tu (Ralstonia nicotianae (strain ATCC BAA-1114 / GMI1000) (Ralstonia solanacearum)).